The primary structure comprises 567 residues: Ribulokinase (567 aa).

Belongs to the ribulokinase family.

It carries out the reaction D-ribulose + ATP = D-ribulose 5-phosphate + ADP + H(+). The enzyme catalyses L-ribulose + ATP = L-ribulose 5-phosphate + ADP + H(+). It participates in carbohydrate degradation; L-arabinose degradation via L-ribulose; D-xylulose 5-phosphate from L-arabinose (bacterial route): step 2/3. In Vibrio parahaemolyticus serotype O3:K6 (strain RIMD 2210633), this protein is Ribulokinase.